Reading from the N-terminus, the 357-residue chain is Embryonic growth/differentiation factor 1 (357 aa).

The N-terminal stretch at 1–23 (MLPVCHRFCDHLLLLLLLPSTTL) is a signal peptide. Residues 24 to 237 (APAPASMGPA…RLCPLPRLRR (214 aa)) constitute a propeptide that is removed on maturation. Asn-191 carries an N-linked (GlcNAc...) asparagine glycan. 3 disulfide bridges follow: Cys-251–Cys-322, Cys-280–Cys-354, and Cys-284–Cys-356.

This sequence belongs to the TGF-beta family. As to quaternary structure, homodimer; disulfide-linked. Expressed almost exclusively in the nervous system.

It is found in the secreted. Its function is as follows. May mediate cell differentiation events during embryonic development. The protein is Embryonic growth/differentiation factor 1 (Gdf1) of Mus musculus (Mouse).